We begin with the raw amino-acid sequence, 386 residues long: Nucleosome assembly protein 1-like 4 (386 aa).

The tract at residues 1–28 is disordered; it reads MAENSLSDGGPADSVEAAKNASNTEKLT. Ala2 carries the N-acetylalanine modification. Residues Ser5, Ser7, and Ser49 each carry the phosphoserine modification. A Phosphothreonine modification is found at Thr51. Phosphoserine occurs at positions 53 and 54. Thr58 carries the post-translational modification Phosphothreonine. Lys105 bears the N6-acetyllysine mark. Ser125 is subject to Phosphoserine. Lys146 carries the N6-acetyllysine modification. The Nuclear localization signal motif lies at 265 to 271; it reads IKKKQKH. Position 304 is a phosphoserine (Ser304). Acidic residues predominate over residues 339–370; sequence AIEDDDNFEEGEEGEEEELEGDEEGEDEDDAD. A disordered region spans residues 339 to 386; sequence AIEDDDNFEEGEEGEEEELEGDEEGEDEDDADVNPKKEPIQPAECKQQ.

This sequence belongs to the nucleosome assembly protein (NAP) family. As to quaternary structure, interacts with core (H2A, H2B, H3, H4) and linker (H1) histones. Polyglutamylated and polyglycylated. These 2 modifications occur exclusively on glutamate residues and result in either polyglutamate or polyglycine chains on the gamma-carboxyl group. Both modifications can coexist on the same protein on adjacent residues, and lowering polyglycylation levels increases polyglutamylation, and reciprocally. Polyglutamylated by TTLL4. In terms of processing, phosphorylated at the G0/G1 boundary but it is not phosphorylated in S-phase. Phosphorylated protein remains in the cytoplasm in a complex with histones during the G0/G1 transition, whereas dephosphorylation triggers its transport into the nucleus at the G1/S-boundary.

It is found in the nucleus. It localises to the cytoplasm. Functionally, acts as a histone chaperone in nucleosome assembly. The polypeptide is Nucleosome assembly protein 1-like 4 (Nap1l4) (Rattus norvegicus (Rat)).